A 403-amino-acid polypeptide reads, in one-letter code: Tryptophan synthase beta chain (403 aa).

An N6-(pyridoxal phosphate)lysine modification is found at Lys-90.

The protein belongs to the TrpB family. Tetramer of two alpha and two beta chains. Pyridoxal 5'-phosphate is required as a cofactor.

The catalysed reaction is (1S,2R)-1-C-(indol-3-yl)glycerol 3-phosphate + L-serine = D-glyceraldehyde 3-phosphate + L-tryptophan + H2O. It functions in the pathway amino-acid biosynthesis; L-tryptophan biosynthesis; L-tryptophan from chorismate: step 5/5. In terms of biological role, the beta subunit is responsible for the synthesis of L-tryptophan from indole and L-serine. The sequence is that of Tryptophan synthase beta chain from Leifsonia xyli subsp. xyli (strain CTCB07).